The primary structure comprises 151 residues: MRVSGRPMLLALLLLLSTVGDPGHAQPRGPADRQTLLRLLVELVQELKKFHIGDSKRLQLLGESDFALGRREATDYGADQEEQRVEIVPRDLRMKDKFLKHLTGPLYFSPKCSKHFHRLYHNTRDCTIPAYYKRCARLLTRLAVSPMCMER.

Positions 1 to 25 are cleaved as a signal peptide; that stretch reads MRVSGRPMLLALLLLLSTVGDPGHA. 2 cysteine pairs are disulfide-bonded: C112-C148 and C126-C135.

It belongs to the ALKAL family. In terms of assembly, homodimer.

The protein localises to the secreted. Its subcellular location is the cell membrane. Its function is as follows. Cytokine that acts as a physiological ligand for receptor tyrosine kinases LTK and ALK, leading to their activation. Cytokine-binding is sufficient to activate LTK. In contrast, ALKAL2-driven activation of ALK is coupled with heparin-binding to ALK. Stimulation of ALK signaling is involved in neural development and regulation of energy expenditure. The protein is ALK and LTK ligand 2 of Rattus norvegicus (Rat).